A 97-amino-acid polypeptide reads, in one-letter code: Co-chaperonin GroES (97 aa).

Belongs to the GroES chaperonin family. Heptamer of 7 subunits arranged in a ring. Interacts with the chaperonin GroEL.

It localises to the cytoplasm. Functionally, together with the chaperonin GroEL, plays an essential role in assisting protein folding. The GroEL-GroES system forms a nano-cage that allows encapsulation of the non-native substrate proteins and provides a physical environment optimized to promote and accelerate protein folding. GroES binds to the apical surface of the GroEL ring, thereby capping the opening of the GroEL channel. In Blochmanniella pennsylvanica (strain BPEN), this protein is Co-chaperonin GroES.